The following is a 740-amino-acid chain: F-BAR and double SH3 domains protein 2 (740 aa).

The region spanning 8 to 282 (VKVTQELRNI…NSSKVVRDYN (275 aa)) is the F-BAR domain. Residues 303 to 323 (PCDSDTSRQLESETGTTEEHS) are disordered. Positions 307 to 323 (DTSRQLESETGTTEEHS) are enriched in basic and acidic residues. A coiled-coil region spans residues 356–397 (GVALSEQSRAELEQKIDEARESIRKAEIIKLKAEARLDLLKQ). SH3 domains follow at residues 469 to 530 (NYPL…FPTS) and 567 to 629 (ASVC…ELSA). Residues 567–629 (ASVCFVKALY…PSVLVEELSA (63 aa)) are required and sufficient for location at clathrin-coated pits. The segment covering 629-645 (ASENGDTPWTREIQISP) has biased composition (polar residues). Residues 629–740 (ASENGDTPWT…KMEDVEITLV (112 aa)) form a disordered region. The span at 646–657 (SPKPHTSLPPLP) shows a compositional bias: pro residues. S675 and S681 each carry phosphoserine. Residues 675–706 (SQFFPRSPSANENSLHAESPGFSQASRQTPDT) show a composition bias toward polar residues.

In terms of assembly, homodimer. Interacts (via SH3 domain 2) with ITSN1 (via SH3 domain 4). Recruited to clathrin-coated pits during a mid-to-late stage of assembly via interaction with ITSN1. Interacts (via SH3 domain 1) with WASL. Interacts with WAS. Interacts with CASK and MAGI1. CASK inhibits interaction with MAGI1. Post-translationally, phosphorylated. Phosphorylation on a Ser residue is important for recruitment to the cell membrane and for its role in promoting endocytosis. Detected in inner ear vestibula and in stereocilia in cochlear hair cell bundles (at protein level). Ubiquitous. Detected in testis, liver, brain cortex, cerebellum, kidney, organ of Corti, utricle, spiral ganglion, tongue and eye.

Its subcellular location is the cytoplasm. It localises to the cell junction. The protein localises to the membrane. The protein resides in the clathrin-coated pit. It is found in the cell membrane. Its subcellular location is the cell projection. It localises to the stereocilium. Functionally, adapter protein that plays a role in endocytosis via clathrin-coated pits. Contributes to the internalization of cell surface receptors, such as integrin ITGB1 and transferrin receptor. Promotes endocytosis of EGFR in cancer cells, and thereby contributes to the down-regulation of EGFR signaling. Recruited to clathrin-coated pits during a mid-to-late stage of assembly, where it is required for normal progress from U-shaped intermediate stage pits to terminal, omega-shaped pits. Binds to membranes enriched in phosphatidylinositol 3,4-bisphosphate or phosphatidylinositol 3,4,5-trisphosphate. When bound to membranes, promotes actin polymerization via its interaction with WAS and/or WASL which leads to the activation of the Arp2/3 complex. Does not promote actin polymerisation in the absence of membranes. This Mus musculus (Mouse) protein is F-BAR and double SH3 domains protein 2 (Fchsd2).